The chain runs to 437 residues: Serine--tRNA ligase (437 aa).

Residue 244–246 (TAE) coordinates L-serine. 275–277 (RSE) contributes to the ATP binding site. Position 298 (glutamate 298) interacts with L-serine. Residue 362–365 (EISS) coordinates ATP. Serine 397 serves as a coordination point for L-serine.

Belongs to the class-II aminoacyl-tRNA synthetase family. Type-1 seryl-tRNA synthetase subfamily. In terms of assembly, homodimer. The tRNA molecule binds across the dimer.

It localises to the cytoplasm. The enzyme catalyses tRNA(Ser) + L-serine + ATP = L-seryl-tRNA(Ser) + AMP + diphosphate + H(+). The catalysed reaction is tRNA(Sec) + L-serine + ATP = L-seryl-tRNA(Sec) + AMP + diphosphate + H(+). It participates in aminoacyl-tRNA biosynthesis; selenocysteinyl-tRNA(Sec) biosynthesis; L-seryl-tRNA(Sec) from L-serine and tRNA(Sec): step 1/1. Functionally, catalyzes the attachment of serine to tRNA(Ser). Is also able to aminoacylate tRNA(Sec) with serine, to form the misacylated tRNA L-seryl-tRNA(Sec), which will be further converted into selenocysteinyl-tRNA(Sec). The protein is Serine--tRNA ligase of Nitrosomonas eutropha (strain DSM 101675 / C91 / Nm57).